The primary structure comprises 69 residues: Large ribosomal subunit protein uL29 (69 aa).

This sequence belongs to the universal ribosomal protein uL29 family.

The sequence is that of Large ribosomal subunit protein uL29 from Rhodospirillum centenum (strain ATCC 51521 / SW).